The following is a 497-amino-acid chain: Proline--tRNA ligase (497 aa).

Belongs to the class-II aminoacyl-tRNA synthetase family. ProS type 3 subfamily. In terms of assembly, homodimer.

Its subcellular location is the cytoplasm. It carries out the reaction tRNA(Pro) + L-proline + ATP = L-prolyl-tRNA(Pro) + AMP + diphosphate. Functionally, catalyzes the attachment of proline to tRNA(Pro) in a two-step reaction: proline is first activated by ATP to form Pro-AMP and then transferred to the acceptor end of tRNA(Pro). The protein is Proline--tRNA ligase of Bacteroides fragilis (strain ATCC 25285 / DSM 2151 / CCUG 4856 / JCM 11019 / LMG 10263 / NCTC 9343 / Onslow / VPI 2553 / EN-2).